Consider the following 301-residue polypeptide: Glycine cleavage system transcriptional activator homolog (301 aa).

Residues 10–67 (PPLNSLKSFESAARYLSFTKAADELCVTQAAVSHQIKLLEXFLGIDLFKRKNRSLELT) enclose the HTH lysR-type domain. The H-T-H motif DNA-binding region spans 27 to 46 (FTKAADELCVTQAAVSHQIK).

It belongs to the LysR transcriptional regulatory family.

It is found in the cytoplasm. In terms of biological role, not known, the gcv operon regulated by the E.coli homolog does not exist in H.influenzae, so it probably acts as a transcriptional regulator on some other operon. In Haemophilus influenzae (strain ATCC 51907 / DSM 11121 / KW20 / Rd), this protein is Glycine cleavage system transcriptional activator homolog (gcvA).